We begin with the raw amino-acid sequence, 585 residues long: Arginine--tRNA ligase (585 aa).

The 'HIGH' region motif lies at 126 to 136; the sequence is PNIAKEMHVGH.

This sequence belongs to the class-I aminoacyl-tRNA synthetase family. As to quaternary structure, monomer.

It is found in the cytoplasm. It catalyses the reaction tRNA(Arg) + L-arginine + ATP = L-arginyl-tRNA(Arg) + AMP + diphosphate. The protein is Arginine--tRNA ligase of Trichodesmium erythraeum (strain IMS101).